A 110-amino-acid polypeptide reads, in one-letter code: Bowman-Birk type proteinase inhibitor (110 aa).

A signal peptide spans 1–19; the sequence is MVVLKVCLVLLFLVGGTTS. Positions 20-39 are excised as a propeptide; it reads ANLRLSKLGLLMKSDHQHSN. Intrachain disulfides connect Cys47–Cys101, Cys48–Cys63, Cys51–Cys97, Cys53–Cys61, Cys71–Cys78, Cys75–Cys90, and Cys80–Cys88.

This sequence belongs to the Bowman-Birk serine protease inhibitor family.

In terms of biological role, inhibitor of trypsin and of chymotrypsin. This Glycine max (Soybean) protein is Bowman-Birk type proteinase inhibitor.